Consider the following 413-residue polypeptide: Monacolin J acid methylbutanoyltransferase (413 aa).

A monacolin J-binding site is contributed by Arg73. The active-site Acyl-ester intermediate is the Ser76. Monacolin J contacts are provided by Arg173, Tyr188, and Tyr258. Gly366 contacts 2-methylbutanoate. Positions 388 and 390 each coordinate monacolin J.

The protein belongs to the class-A beta-lactamase family. In terms of assembly, interacts with LovF.

The catalysed reaction is monacolin J carboxylate + (S)-2-methylbutanoyl-[2-methylbutanoate polyketide synthase] = lovastatin carboxylate + holo-[2-methylbutanoate polyketide synthase]. The protein operates within polyketide biosynthesis; lovastatin biosynthesis. Its function is as follows. Monacolin J acid methylbutanoyltransferase; part of the gene cluster that mediates the biosynthesis of lovastatin (also known as mevinolin, mevacor or monacolin K), a hypolipidemic inhibitor of (3S)-hydroxymethylglutaryl-coenzyme A (HMG-CoA) reductase (HMGR). The first step in the biosynthesis of lovastatin is the production of dihydromonacolin L acid by the lovastatin nonaketide synthase lovB and the trans-acting enoyl reductase lovC via condensation of one acetyl-CoA unit and 8 malonyl-CoA units. Dihydromonacolin L acid is released from lovB by the thioesterase lovG. Next, dihydromonacolin L acid is oxidized by the dihydromonacolin L monooxygenase lovA twice to form monacolin J acid. The 2-methylbutyrate moiety of lovastatin is synthesized by the lovastatin diketide synthase lovF via condensation of one acetyl-CoA unit and one malonyl-CoA unit. Finally, the covalent attachment of this moiety to monacolin J acid is catalyzed by the transesterase lovD to yield lovastatin. LovD has broad substrate specificity and can also convert monacolin J to simvastatin using alpha-dimethylbutanoyl-S-methyl-3-mercaptopropionate (DMB-S-MMP) as the thioester acyl donor, and can also catalyze the reverse reaction and function as hydrolase in vitro. LovD has much higher activity with LovF-bound 2-methylbutanoate than with free diketide substrates. This Aspergillus terreus protein is Monacolin J acid methylbutanoyltransferase.